Reading from the N-terminus, the 1443-residue chain is MATQADDAAASQANIEDGDLKEHVHDELDKIQQQRSTATVFPEPLRESDSEDSDDEDNGPAQAPPMFMNMNQSIYGLIAQASNRVDFNDRFDGMSSDEEGESSQNTRTESIARTSILQPAGKGKDKVHRRRKLSEHKLLRSLPALPKLRSRHKSQHSTLPAPEEVADEADDEHGDGGLLPAPALTLTRQDTQDRLAPVMSRMLEAKADLSIRPSFDLDRLSSDVSRSSDSDEVSALSRKLKEIFEFDEYEQVIEEYPCWLLQSVLLQGYMYITSKHICFYAYLPKKTHEAVKSGYLSKSGKRNPSYARFWFRLKGDVLTYYKTATDVYFPHGQIDLRYGISASIVDTDKEALHFVVETRHRTYKFKADSAPSAKEWVKSLQRVIFRSHNDGDSVKISLPIKNVMDIEDTQMISFADTCKIRVIDNDETYAIDEYFFSFFSFGKEAINVLKILIEDSSGARSAEQVITGDDHDSSQPSSGHASKAASKRAPSKLSTGKLPDTVKATLAPMSPLSPRSPSQLSPRASMDAPRSSFDGFRRFGKKSLDVTSSIGDHSPRRSFSGRRSTSHQHRQGTTTPKQAHDSEDSFLQSSIENPSISTLSPSSYDEPSASQILQGSDVFHSPMMRRSASTSRKRDRSGKRTPRSSSAHGDRHHGIPHAATTGAIHKMGDEQADSQRPATPTLNSITKIGAYPLQRANAFAEYLSRTSQRMGSMFATESLGYVEKVHGMWKGEHRHYDEPQELRTDDDGEDIDSEADDKMQTTIDRFRAHFALPESEKLVATYFGAIFKVLPLYGKFYISDRSFCFRSLYPGTRTKLILPLKDIENVHKEKGFRYGYYGLTVVIRGHEELFFEFRKPGLRDDCAVTLHQLMETNRFLEQSGILDQEEQDDEEAAAAMAERDELQEARQDEFVDHELTLPRTTSGVSNAPTILFDNPNSSGLAFKPQKSMKITCLTIGSRGDIQPYIALCKGLLAEGHKPRIATHGEFQEWVESHGIEFARVEGDPGELMRLCIENGTFTWAFLREANSTFRGWLDDLLDSAYTACEGSELLIESPSAMAGIHIAEKLEIPYFRAFTMPWTRTRAYPHAFIMPEHKMGGAFNYMTYVMFDNIFWKATAYQVNRWRNKTLGLPSTSLEKMQPNKVPFLYNFSPSVVAPPLDFSDWIRVTGYWFLNEGGGDWKPPQELQDFIAKARADGKKIVYVGFGSIIVKDPAKMTQEVIDAVLKADVRCILSKGWSDRISPKDDPSKPPPDEPVIPAEIHVITSAPHDWLFSQIDAAAHHGGSGTTGASLRAGIPTIIRPFFGDQFFFSTRVEDLGVGVCVRKWGTNSFGRALWEVTRNERMIVKARVLGEQIRSESGVDNAIQCIYRDLEYAKSLIKRRAGKNNAEHGLAEDDDDTEESWTFVGRDEPDPDAVTKKLSDGLAGLGAAGDRPPPLGSQAPTVA.

Low complexity predominate over residues 1 to 13 (MATQADDAAASQA). Disordered regions lie at residues 1 to 69 (MATQ…MFMN) and 88 to 187 (NDRF…LTLT). The segment covering 18 to 32 (GDLKEHVHDELDKIQ) has biased composition (basic and acidic residues). The span at 49-58 (DSEDSDDEDN) shows a compositional bias: acidic residues. A compositionally biased stretch (polar residues) spans 104 to 117 (QNTRTESIARTSIL). The segment covering 125-134 (DKVHRRRKLS) has biased composition (basic residues). Acidic residues predominate over residues 164–173 (EVADEADDEH). One can recognise a GRAM 1 domain in the interval 240–284 (LKEIFEFDEYEQVIEEYPCWLLQSVLLQGYMYITSKHICFYAYLP). One can recognise a PH domain in the interval 289–385 (EAVKSGYLSK…WVKSLQRVIF (97 aa)). A disordered region spans residues 463–657 (EQVITGDDHD…HGDRHHGIPH (195 aa)). Residues 506 to 525 (LAPMSPLSPRSPSQLSPRAS) show a composition bias toward low complexity. Over residues 585 to 614 (SFLQSSIENPSISTLSPSSYDEPSASQILQ) the composition is skewed to polar residues. The segment covering 631 to 642 (SRKRDRSGKRTP) has biased composition (basic residues). Residues 765–870 (RFRAHFALPE…DCAVTLHQLM (106 aa)) form the GRAM 2 domain. Residues 883-910 (DQEEQDDEEAAAAMAERDELQEARQDEF) are a coiled coil. Positions 957, 958, 960, 1265, 1267, 1280, 1283, 1284, 1285, 1304, and 1305 each coordinate UDP-alpha-D-glucose. The interval 1385-1443 (NAEHGLAEDDDDTEESWTFVGRDEPDPDAVTKKLSDGLAGLGAAGDRPPPLGSQAPTVA) is disordered. The segment covering 1405–1419 (GRDEPDPDAVTKKLS) has biased composition (basic and acidic residues).

It belongs to the glycosyltransferase 28 family.

The protein localises to the cytoplasm. Its subcellular location is the preautophagosomal structure membrane. It carries out the reaction a sterol + UDP-alpha-D-glucose = a sterol 3-beta-D-glucoside + UDP + H(+). The enzyme catalyses ergosterol + UDP-alpha-D-glucose = ergosteryl 3-beta-D-glucoside + UDP + H(+). Sterol glycosyltransferase responsible for the glycosylation of ergosterol to form ergosterol-glucoside. This chain is Sterol 3-beta-glucosyltransferase ATG26, found in Gibberella zeae (strain ATCC MYA-4620 / CBS 123657 / FGSC 9075 / NRRL 31084 / PH-1) (Wheat head blight fungus).